Here is a 147-residue protein sequence, read N- to C-terminus: Large ribosomal subunit protein bL9 (147 aa).

The protein belongs to the bacterial ribosomal protein bL9 family.

Binds to the 23S rRNA. In Geotalea daltonii (strain DSM 22248 / JCM 15807 / FRC-32) (Geobacter daltonii), this protein is Large ribosomal subunit protein bL9.